Consider the following 230-residue polypeptide: UPF0494 membrane protein PB2B2.14c (230 aa).

3 helical membrane-spanning segments follow: residues 78 to 98 (WPLLIIWCILIVFAIDKNFEV), 120 to 140 (IWGPIAIYICLFVLLLLGLIY), and 148 to 168 (AIPLISIVIAAVVVIIAVAMV).

The protein belongs to the UPF0494 family.

The protein resides in the membrane. The protein is UPF0494 membrane protein PB2B2.14c of Schizosaccharomyces pombe (strain 972 / ATCC 24843) (Fission yeast).